Here is a 98-residue protein sequence, read N- to C-terminus: uncharacterized protein (98 aa).

This sequence belongs to the YciI family. As to quaternary structure, homodimer.

This is an uncharacterized protein from Haemophilus influenzae (strain ATCC 51907 / DSM 11121 / KW20 / Rd).